A 171-amino-acid chain; its full sequence is Large ribosomal subunit protein uL10 (171 aa).

This sequence belongs to the universal ribosomal protein uL10 family. As to quaternary structure, part of the ribosomal stalk of the 50S ribosomal subunit. The N-terminus interacts with L11 and the large rRNA to form the base of the stalk. The C-terminus forms an elongated spine to which L12 dimers bind in a sequential fashion forming a multimeric L10(L12)X complex.

Its function is as follows. Forms part of the ribosomal stalk, playing a central role in the interaction of the ribosome with GTP-bound translation factors. In Erythrobacter litoralis (strain HTCC2594), this protein is Large ribosomal subunit protein uL10.